The following is a 437-amino-acid chain: Elongation factor Tu, mitochondrial (437 aa).

The transit peptide at 1–38 directs the protein to the mitochondrion; sequence MSALLPRLLTRTAFKASGKLLRLSSVISRTFSQTTTSY. Residues 46–242 form the tr-type G domain; it reads KPHVNIGTIG…AVDEYIPTPE (197 aa). The G1 stretch occupies residues 55–62; the sequence is GHVDHGKT. 55 to 62 is a binding site for GTP; sequence GHVDHGKT. The interval 96 to 100 is G2; the sequence is GITIS. Residues 117–120 form a G3 region; it reads DCPG. Residues 117–121 and 172–175 each bind GTP; these read DCPGH and NKVD. Residues 172–175 are G4; it reads NKVD. Residues 210-212 are G5; it reads SAL.

It belongs to the TRAFAC class translation factor GTPase superfamily. Classic translation factor GTPase family. EF-Tu/EF-1A subfamily. In terms of processing, the precursor is processed in two steps involving mitochondrial intermediate peptidase (MIP) and mitochondrial processing peptidase (MPP).

It is found in the mitochondrion. It participates in protein biosynthesis; polypeptide chain elongation. In terms of biological role, G-protein that, in its active GTP-bound form, binds to and delivers aminoacyl-tRNA to the A-site of ribosomes during protein biosynthesis. In the presence of a correct codon-anticodon match between the aminoacyl-tRNA and the A-site codon of the ribosome-bound mRNA, the ribosome acts as a GTPase activator and the GTP is hydrolyzed. The inactive GDP-bound form leaves the ribosome and must be recycled before binding another molecule of aminoacyl-tRNA. Required for mitochondrial protein biosynthesis and maintenance of mitochondrial DNA. This Saccharomyces cerevisiae (strain ATCC 204508 / S288c) (Baker's yeast) protein is Elongation factor Tu, mitochondrial (TUF1).